Reading from the N-terminus, the 190-residue chain is Threonylcarbamoyl-AMP synthase (190 aa).

Residues 7–190 (GDAIAAAIDV…ALTGELFRQG (184 aa)) enclose the YrdC-like domain.

It belongs to the SUA5 family. TsaC subfamily.

It is found in the cytoplasm. It carries out the reaction L-threonine + hydrogencarbonate + ATP = L-threonylcarbamoyladenylate + diphosphate + H2O. Its function is as follows. Required for the formation of a threonylcarbamoyl group on adenosine at position 37 (t(6)A37) in tRNAs that read codons beginning with adenine. Catalyzes the conversion of L-threonine, HCO(3)(-)/CO(2) and ATP to give threonylcarbamoyl-AMP (TC-AMP) as the acyladenylate intermediate, with the release of diphosphate. The polypeptide is Threonylcarbamoyl-AMP synthase (Shigella boydii serotype 4 (strain Sb227)).